The sequence spans 288 residues: Bis(5'-nucleosyl)-tetraphosphatase, symmetrical (288 aa).

This sequence belongs to the Ap4A hydrolase family.

It catalyses the reaction P(1),P(4)-bis(5'-adenosyl) tetraphosphate + H2O = 2 ADP + 2 H(+). In terms of biological role, hydrolyzes diadenosine 5',5'''-P1,P4-tetraphosphate to yield ADP. The polypeptide is Bis(5'-nucleosyl)-tetraphosphatase, symmetrical (Pseudomonas putida (strain ATCC 700007 / DSM 6899 / JCM 31910 / BCRC 17059 / LMG 24140 / F1)).